We begin with the raw amino-acid sequence, 229 residues long: Uracil-DNA glycosylase (229 aa).

The active-site Proton acceptor is the D64.

This sequence belongs to the uracil-DNA glycosylase (UDG) superfamily. UNG family.

The protein resides in the cytoplasm. It carries out the reaction Hydrolyzes single-stranded DNA or mismatched double-stranded DNA and polynucleotides, releasing free uracil.. Its function is as follows. Excises uracil residues from the DNA which can arise as a result of misincorporation of dUMP residues by DNA polymerase or due to deamination of cytosine. This Escherichia fergusonii (strain ATCC 35469 / DSM 13698 / CCUG 18766 / IAM 14443 / JCM 21226 / LMG 7866 / NBRC 102419 / NCTC 12128 / CDC 0568-73) protein is Uracil-DNA glycosylase.